Here is a 38-residue protein sequence, read N- to C-terminus: 4 kDa defensin (38 aa).

3 disulfides stabilise this stretch: Cys-4-Cys-25, Cys-11-Cys-33, and Cys-15-Cys-35.

This sequence belongs to the invertebrate defensin family. Type 2 subfamily.

It is found in the secreted. Dual-function peptide with antimicrobial and potassium channel-blocking activities. Shows inhibitory activity against Gram-positive bacteria such as M.luteus, S.aureus, B.subtilis, and M.luteus as well as methicillin-resistant S.aureus (MIC=0.1-20 uM). Does not act on bacteria by disrupting membranes. Also moderately inhibits Kv1.1/KCNA1, Kv1.2/KCNA2, and Kv1.3/KCNA3 potassium channels. Inhibits potassium channels by interacting with the pore region. Does not show hemolytic activity. The polypeptide is 4 kDa defensin (Leiurus hebraeus (Hebrew deathstalker scorpion)).